A 1162-amino-acid polypeptide reads, in one-letter code: Enhanced level of genomic instability 1 (1162 aa).

Disordered stretches follow at residues 1–136 (MTDV…ADNQ), 144–163 (KAGKPENVGVSPVSTAKPKP), 179–202 (LGVNEGGAESPADQEIGSEAATPT), 249–319 (KTDA…TKKR), 348–380 (METPKRRTLRRKSQQETPIVAESTPSSRPRRSC), 611–634 (RSMEQNMAQNEEEAKPPPSAPNGE), and 666–697 (WSGNGGSNRNSQGMDDTFDMSNDSASMGSSSN). Residues 65-78 (KQKHREKHKRKREE) show a composition bias toward basic residues. The span at 79 to 111 (KRRAALMEDQKSTTEEVKANAKEKPQPLREKSS) shows a compositional bias: basic and acidic residues. Over residues 125 to 136 (PLKSSTPVADNQ) the composition is skewed to polar residues. Residues 268–278 (KRLRGRPRSRR) are compositionally biased toward basic residues. Low complexity-rich tracts occupy residues 666-676 (WSGNGGSNRNS) and 684-697 (DMSNDSASMGSSSN). Residue 703-710 (GPSSSGKT) participates in ATP binding. 2 disordered regions span residues 900-923 (GDSTRDRTGGGIKSPTKTSNSRLA) and 975-1008 (QAAGGGSRTAAKRKSRSPKKAWLSSATGQKSDGH). Basic residues predominate over residues 984–993 (AAKRKSRSPK). Over residues 998–1008 (SSATGQKSDGH) the composition is skewed to polar residues.

Belongs to the ELG1 family. In terms of assembly, component of a heteropentameric Elg1 RFC-like complex composed of one large subunit (elg1) and four small subunits (RfC4, RfC38, CG8142 and RfC3). As part of the complex, might interact with the Enok complex, composed of enok, Br140, Eaf6 and Ing5. Within the Enok complex, interacts directly with Br140. In terms of tissue distribution, expressed at higher levels in the germline nurse cells than in the somatic follicle cells.

Its subcellular location is the nucleus. Has an important role in DNA replication and in maintaining genome integrity during replication stress. Promotes PCNA deubiquitination. As component of the Elg1 RFC-like complex, regulates the functions of the DNA polymerase processivity factor PCNA by unloading it from DNA after replication during the S phase of the cell cycle. The PCNA-unloading might be regulated via interaction with the Enok acetyltransferase complex. Might have a role in restarting of stalled/regressed replication forks during replication stress. In the ovaries, has a role in nurse cell endoreplication. This is Enhanced level of genomic instability 1 from Drosophila melanogaster (Fruit fly).